Here is a 209-residue protein sequence, read N- to C-terminus: MDTLWDITPAVDTATPVWPGDTPVGIERVWRMEAGSPVNVARLTMSPHTGAHTDAPLHYDAGGVAIGAVPLDSYLGRCRVIHCIGVKPLVMPDDLAGSLDGVPPRVLLRTYREAPTTFWDSGFCAVAPETIDLLAARGVKLIGIDTPSLDPQESKTMDAHHRIRAHRMAILEGIVLDAVAPGDYELIALPLKLSTLDASPVRAVLRSLT.

Residue Trp18 coordinates substrate. Positions 48, 52, and 54 each coordinate Zn(2+). The Proton donor/acceptor role is filled by His58. Zn(2+) is bound by residues His160 and Glu172.

Belongs to the Cyclase 1 superfamily. KynB family. As to quaternary structure, homodimer. It depends on Zn(2+) as a cofactor.

The catalysed reaction is N-formyl-L-kynurenine + H2O = L-kynurenine + formate + H(+). It participates in amino-acid degradation; L-tryptophan degradation via kynurenine pathway; L-kynurenine from L-tryptophan: step 2/2. In terms of biological role, catalyzes the hydrolysis of N-formyl-L-kynurenine to L-kynurenine, the second step in the kynurenine pathway of tryptophan degradation. The polypeptide is Kynurenine formamidase (Paraburkholderia phymatum (strain DSM 17167 / CIP 108236 / LMG 21445 / STM815) (Burkholderia phymatum)).